The chain runs to 417 residues: Serine hydroxymethyltransferase (417 aa).

(6S)-5,6,7,8-tetrahydrofolate contacts are provided by residues Leu-121 and 125–127 (GHL). Lys-230 is subject to N6-(pyridoxal phosphate)lysine. 355–357 (SPF) is a binding site for (6S)-5,6,7,8-tetrahydrofolate.

Belongs to the SHMT family. In terms of assembly, homodimer. Requires pyridoxal 5'-phosphate as cofactor.

Its subcellular location is the cytoplasm. The catalysed reaction is (6R)-5,10-methylene-5,6,7,8-tetrahydrofolate + glycine + H2O = (6S)-5,6,7,8-tetrahydrofolate + L-serine. The protein operates within one-carbon metabolism; tetrahydrofolate interconversion. It participates in amino-acid biosynthesis; glycine biosynthesis; glycine from L-serine: step 1/1. Catalyzes the reversible interconversion of serine and glycine with tetrahydrofolate (THF) serving as the one-carbon carrier. This reaction serves as the major source of one-carbon groups required for the biosynthesis of purines, thymidylate, methionine, and other important biomolecules. Also exhibits THF-independent aldolase activity toward beta-hydroxyamino acids, producing glycine and aldehydes, via a retro-aldol mechanism. The sequence is that of Serine hydroxymethyltransferase from Legionella pneumophila subsp. pneumophila (strain Philadelphia 1 / ATCC 33152 / DSM 7513).